A 1068-amino-acid polypeptide reads, in one-letter code: MAGNEWINGYLEAILDSHTSSRGAGGGGGGGDPRSPTKAASPRGAHMNFNPSHYFVEEVVKGVDESDLHRTWIKVVATRNARERSTRLENMCWRIWHLARKKKQLELEGIQRISARRKEQEQVRREATEDLAEDLSEGEKGDTIGELAPVETTKKKFQRNFSDLTVWSDDNKEKKLYIVLISVHGLVRGENMELGRDSDTGGQVKYVVELARAMSMMPGVYRVDLFTRQVSSPDVDWSYGEPTEMLCAGSNDGEGMGESGGAYIVRIPCGPRDKYLKKEALWPYLQEFVDGALAHILNMSKALGEQVGNGRPVLPYVIHGHYADAGDVAALLSGALNVPMVLTGHSLGRNKLEQLLKQGRMSKEEIDSTYKIMRRIEGEELALDASELVITSTRQEIDEQWGLYDGFDVKLEKVLRARARRGVSCHGRYMPRMVVIPPGMDFSNVVVHEDIDGDGDVKDDIVGLEGASPKSMPPIWAEVMRFLTNPHKPMILALSRPDPKKNITTLVKAFGECRPLRELANLTLIMGNRDDIDDMSAGNASVLTTVLKLIDKYDLYGSVAFPKHHNQADVPEIYRLAAKMKGVFINPALVEPFGLTLIEAAAHGLPIVATKNGGPVDITNALNNGLLVDPHDQNAIADALLKLVADKNLWQECRRNGLRNIHLYSWPEHCRTYLTRVAGCRLRNPRWLKDTPADAGADEEEFLEDSMDAQDLSLRLSIDGEKSSLNTNDPLWFDPQDQVQKIMNNIKQSSALPPSMSSVAAEGTGSTMNKYPLLRRRRRLFVIAVDCYQDDGRASKKMLQVIQEVFRAVRSDSQMFKISGFTLSTAMPLSETLQLLQLGKIPATDFDALICGSGSEVYYPGTANCMDAEGKLRPDQDYLMHISHRWSHDGARQTIAKLMGAQDGSGDAVEQDVASSNAHCVAFLIKDPQKVKTVDEMRERLRMRGLRCHIMYCRNSTRLQVVPLLASRSQALRYLSVRWGVSVGNMYLITGEHGDTDLEEMLSGLHKTVIVRGVTEKGSEALVRSPGSYKRDDVVPSETPLAAYTTGELKADEIMRALKQVSKTSSGM.

2 disordered regions span residues H18 to M47 and K118 to E139. Over residues G23–D32 the composition is skewed to gly residues. The span at K118 to T128 shows a compositional bias: basic and acidic residues.

Belongs to the glycosyltransferase 1 family. As to quaternary structure, homodimer or homotetramer.

It catalyses the reaction beta-D-fructose 6-phosphate + UDP-alpha-D-glucose = sucrose 6(F)-phosphate + UDP + H(+). The protein operates within glycan biosynthesis; sucrose biosynthesis; sucrose from D-fructose 6-phosphate and UDP-alpha-D-glucose: step 1/2. With respect to regulation, activity is regulated by phosphorylation and moderated by concentration of metabolites and light. In terms of biological role, plays a role in photosynthetic sucrose synthesis by catalyzing the rate-limiting step of sucrose biosynthesis from UDP-glucose and fructose- 6-phosphate. Involved in the regulation of carbon partitioning in the leaves of plants. May regulate the synthesis of sucrose and therefore play a major role as a limiting factor in the export of photoassimilates out of the leaf. Plays a role for sucrose availability that is essential for plant growth and fiber elongation. The chain is Sucrose-phosphate synthase from Zea mays (Maize).